A 235-amino-acid chain; its full sequence is MATPSSATSLNVENIVFPSSVKPPGDTNTLFLGGAGVRGMEIQGNFVKFTGIGVYLEDKAIPLLAGKWKGKTAEELVNSVEFFRDIVTGPFKKFTQVTMILPLTGKQYSEKVSEMCVGVWKAHGTYTDADGATIDKFLEVFKDENFPPGASILFTTSPDGSLTISFSKDGMIPEAANIVLENEKLAQAVIESVIGKNGVSPATKQSLASRLADLMNHFDEKATTDAEPNLSKNGL.

Thr-50 and Ser-192 together coordinate substrate.

Belongs to the chalcone isomerase family.

The catalysed reaction is a chalcone = a flavanone.. It functions in the pathway secondary metabolite biosynthesis; flavonoid biosynthesis. Its function is as follows. Catalyzes the intramolecular cyclization of bicyclic chalcones into tricyclic (S)-flavanones. Responsible for the isomerization of 4,2',4',6'-tetrahydroxychalcone (also termed chalcone) into naringenin. This chain is Chalcone--flavanone isomerase 1 (CHI1), found in Chrysanthemum morifolium (Florist's daisy).